The primary structure comprises 104 residues: Thioredoxin-3 (104 aa).

Residues 2-104 enclose the Thioredoxin domain; it reads SKVIHVTSNE…TLRSTLEANI (103 aa). Catalysis depends on nucleophile residues Cys31 and Cys34. Cysteines 31 and 34 form a disulfide.

It belongs to the thioredoxin family.

In terms of biological role, participates in various redox reactions through the reversible oxidation of its active center dithiol to a disulfide and catalyzes dithiol-disulfide exchange reactions. This Dictyostelium discoideum (Social amoeba) protein is Thioredoxin-3 (trxC).